We begin with the raw amino-acid sequence, 592 residues long: uncharacterized protein (592 aa).

The next 6 helical transmembrane spans lie at 12–32 (IWIL…IFLL), 58–78 (PILF…ISLV), 102–122 (MGLF…SYYL), 191–211 (ISYT…GVEI), 214–234 (MMVF…FWLG), and 299–319 (FSGF…LIQV). The 301-residue stretch at 58–358 (PILFFLLIVA…FRSTYDNFAS (301 aa)) folds into the ABC transmembrane type-1 domain. In terms of domain architecture, ABC transporter spans 391–592 (VIFKNLSIQN…LQDKGQWQVL (202 aa)). 424 to 431 (GKSGAGKT) provides a ligand contact to ATP.

It belongs to the ABC transporter superfamily.

It localises to the cell inner membrane. This is an uncharacterized protein from Haemophilus influenzae (strain ATCC 51907 / DSM 11121 / KW20 / Rd).